Consider the following 618-residue polypeptide: Proline--tRNA ligase (618 aa).

It belongs to the class-II aminoacyl-tRNA synthetase family. ProS type 1 subfamily. In terms of assembly, homodimer.

Its subcellular location is the cytoplasm. It catalyses the reaction tRNA(Pro) + L-proline + ATP = L-prolyl-tRNA(Pro) + AMP + diphosphate. Its function is as follows. Catalyzes the attachment of proline to tRNA(Pro) in a two-step reaction: proline is first activated by ATP to form Pro-AMP and then transferred to the acceptor end of tRNA(Pro). As ProRS can inadvertently accommodate and process non-cognate amino acids such as alanine and cysteine, to avoid such errors it has two additional distinct editing activities against alanine. One activity is designated as 'pretransfer' editing and involves the tRNA(Pro)-independent hydrolysis of activated Ala-AMP. The other activity is designated 'posttransfer' editing and involves deacylation of mischarged Ala-tRNA(Pro). The misacylated Cys-tRNA(Pro) is not edited by ProRS. In Streptococcus pyogenes serotype M3 (strain ATCC BAA-595 / MGAS315), this protein is Proline--tRNA ligase.